Here is a 580-residue protein sequence, read N- to C-terminus: 2-isopropylmalate synthase (580 aa).

A compositionally biased stretch (polar residues) spans M1–T11. The segment at M1–R37 is disordered. Positions P61–D334 constitute a Pyruvate carboxyltransferase domain. D70, H273, H275, and N309 together coordinate Mg(2+). The tract at residues E476–G580 is regulatory domain.

It belongs to the alpha-IPM synthase/homocitrate synthase family. LeuA type 2 subfamily. In terms of assembly, homodimer. Mg(2+) serves as cofactor.

It is found in the cytoplasm. The catalysed reaction is 3-methyl-2-oxobutanoate + acetyl-CoA + H2O = (2S)-2-isopropylmalate + CoA + H(+). Its pathway is amino-acid biosynthesis; L-leucine biosynthesis; L-leucine from 3-methyl-2-oxobutanoate: step 1/4. Catalyzes the condensation of the acetyl group of acetyl-CoA with 3-methyl-2-oxobutanoate (2-ketoisovalerate) to form 3-carboxy-3-hydroxy-4-methylpentanoate (2-isopropylmalate). In Nocardia farcinica (strain IFM 10152), this protein is 2-isopropylmalate synthase.